A 523-amino-acid chain; its full sequence is UDP-glucuronosyltransferase 3A1 (523 aa).

An N-terminal signal peptide occupies residues 1–22; sequence MAAHRSWLLVSFFLLEVLLLEA. Over 23 to 487 the chain is Extracellular; sequence AKILTISTLS…QPWHEQYMLD (465 aa). Residue asparagine 70 is glycosylated (N-linked (GlcNAc...) asparagine). Residues 488-508 traverse the membrane as a helical segment; that stretch reads VFLFLLGLTLGTLWLSVKVLV. The Cytoplasmic segment spans residues 509–523; it reads AVTRYLSISRKVKQA.

Belongs to the UDP-glycosyltransferase family. As to expression, highly expressed in kidney, while it is expressed at low levels in liver. Not detected in other tissues examined.

The protein resides in the membrane. It catalyses the reaction glucuronate acceptor + UDP-alpha-D-glucuronate = acceptor beta-D-glucuronoside + UDP + H(+). In terms of biological role, UDP-glucuronosyltransferases catalyze phase II biotransformation reactions in which lipophilic substrates are conjugated with glucuronic acid to increase water solubility and enhance excretion. They are of major importance in the conjugation and subsequent elimination of potentially toxic xenobiotics and endogenous compounds. The sequence is that of UDP-glucuronosyltransferase 3A1 (Ugt3a1) from Mus musculus (Mouse).